We begin with the raw amino-acid sequence, 143 residues long: Transcriptional regulator MraZ (143 aa).

2 SpoVT-AbrB domains span residues 5 to 47 and 76 to 119; these read THTP…PRAE and TDEQ…DAQA.

This sequence belongs to the MraZ family. In terms of assembly, forms oligomers.

It is found in the cytoplasm. The protein localises to the nucleoid. In Mycobacterium leprae (strain Br4923), this protein is Transcriptional regulator MraZ.